The chain runs to 479 residues: Muscarinic acetylcholine receptor M4 (479 aa).

Residues 1 to 31 lie on the Extracellular side of the membrane; sequence MANFTPVNGSSGNQSVRLVTSSSHNRYETVE. 2 N-linked (GlcNAc...) asparagine glycosylation sites follow: N8 and N13. The helical transmembrane segment at 32 to 54 threads the bilayer; it reads MVFIATVTGSLSLVTVVGNILVM. Residues 55-68 lie on the Cytoplasmic side of the membrane; sequence LSIKVNRQLQTVNN. A helical transmembrane segment spans residues 69 to 89; that stretch reads YFLFSLACADLIIGAFSMNLY. Residues 90–106 are Extracellular-facing; that stretch reads TVYIIKGYWPLGAVVCD. The cysteines at positions 105 and 185 are disulfide-linked. The helical transmembrane segment at 107–128 threads the bilayer; it reads LWLALDYVVSNASVMNLLIISF. Residues 129–148 are Cytoplasmic-facing; that stretch reads DRYFCVTKPLTYPARRTTKM. A helical membrane pass occupies residues 149–171; the sequence is AGLMIAAAWVLSFVLWAPAILFW. The Extracellular portion of the chain corresponds to 172–193; the sequence is QFVVGKRTVPDNQCFIQFLSNP. A helical transmembrane segment spans residues 194–216; sequence AVTFGTAIAAFYLPVVIMTVLYI. At 217 to 401 the chain is on the cytoplasmic side; the sequence is HISLASRSRV…AARERKVTRT (185 aa). Residues 271–333 are disordered; the sequence is KLEEAPPPAL…PAPPLQPRAL (63 aa). Over residues 275 to 286 the composition is skewed to pro residues; it reads APPPALPPPPRP. The span at 294-304 shows a compositional bias: polar residues; it reads NESSSGSATQN. The chain crosses the membrane as a helical span at residues 402 to 422; that stretch reads IFAILLAFILTWTPYNVMVLV. Over 423 to 436 the chain is Extracellular; that stretch reads NTFCQSCIPDTVWS. Residues 437–456 form a helical membrane-spanning segment; the sequence is IGYWLCYVNSTINPACYALC. Topologically, residues 457-479 are cytoplasmic; that stretch reads NATFKKTFRHLLLCQYRNIGTAR. Phosphothreonine is present on residues T459, T463, and T477.

Belongs to the G-protein coupled receptor 1 family. Muscarinic acetylcholine receptor subfamily. CHRM4 sub-subfamily.

The protein localises to the cell membrane. It is found in the postsynaptic cell membrane. Functionally, the muscarinic acetylcholine receptor mediates various cellular responses, including inhibition of adenylate cyclase, breakdown of phosphoinositides and modulation of potassium channels through the action of G proteins. Primary transducing effect is inhibition of adenylate cyclase. The polypeptide is Muscarinic acetylcholine receptor M4 (CHRM4) (Homo sapiens (Human)).